A 239-amino-acid chain; its full sequence is MKDDVLKRQAHTAIQKKLGYAFRDMSLLRRALTHRSHHAKHNERFEFVGDSILNYTVARMLFDAFPKLTEGELSRLRASLVNEGVLAEMAAEMNVGDGLYLGAGELKSSGFRRPSILADAMEAMFAAVSFDADFNTAEKVVRHLFAERVRRADFQNQAKDGKTALQEALQARRFALPKYRIEEQIGHADDSMFVISCDLGELGFVCRAKGTSRKAAEQEAAKEALKWLEEKLPLKKKKK.

The RNase III domain maps to 11–133 (HTAIQKKLGY…MFAAVSFDAD (123 aa)). Glu46 serves as a coordination point for Mg(2+). The active site involves Asp50. Mg(2+) contacts are provided by Asp119 and Glu122. Glu122 is a catalytic residue. One can recognise a DRBM domain in the interval 160–230 (DGKTALQEAL…AKEALKWLEE (71 aa)).

Belongs to the ribonuclease III family. As to quaternary structure, homodimer. Mg(2+) serves as cofactor.

The protein resides in the cytoplasm. It catalyses the reaction Endonucleolytic cleavage to 5'-phosphomonoester.. Its function is as follows. Digests double-stranded RNA. Involved in the processing of primary rRNA transcript to yield the immediate precursors to the large and small rRNAs (23S and 16S). Processes some mRNAs, and tRNAs when they are encoded in the rRNA operon. Processes pre-crRNA and tracrRNA of type II CRISPR loci if present in the organism. This is Ribonuclease 3 from Neisseria gonorrhoeae (strain ATCC 700825 / FA 1090).